We begin with the raw amino-acid sequence, 139 residues long: Two-component response regulator 24 (139 aa).

A Response regulatory domain is found at 19-134 (TALVVDDSFV…KLLSILHKLN (116 aa)). Aspartate 69 is modified (4-aspartylphosphate).

This sequence belongs to the ARR family. Type-A subfamily. Post-translationally, two-component system major event consists of a His-to-Asp phosphorelay between a sensor histidine kinase (HK) and a response regulator (RR). In plants, the His-to-Asp phosphorelay involves an additional intermediate named Histidine-containing phosphotransfer protein (HPt). This multistep phosphorelay consists of a His-Asp-His-Asp sequential transfer of a phosphate group between first a His and an Asp of the HK protein, followed by the transfer to a conserved His of the HPt protein and finally the transfer to an Asp in the receiver domain of the RR protein. Mostly expressed in flowers and siliques, primarily restricted to pollen grains.

The protein resides in the nucleus. Its function is as follows. Functions as a response regulator involved in His-to-Asp phosphorelay signal transduction system. Phosphorylation of the Asp residue in the receiver domain activates the ability of the protein to promote the transcription of target genes. Type-A response regulators seem to act as negative regulators of the cytokinin signaling. This chain is Two-component response regulator 24, found in Arabidopsis thaliana (Mouse-ear cress).